We begin with the raw amino-acid sequence, 358 residues long: Peptide chain release factor 1 (358 aa).

Position 237 is an N5-methylglutamine (Gln-237).

It belongs to the prokaryotic/mitochondrial release factor family. In terms of processing, methylated by PrmC. Methylation increases the termination efficiency of RF1.

The protein localises to the cytoplasm. In terms of biological role, peptide chain release factor 1 directs the termination of translation in response to the peptide chain termination codons UAG and UAA. The polypeptide is Peptide chain release factor 1 (Streptomyces griseus subsp. griseus (strain JCM 4626 / CBS 651.72 / NBRC 13350 / KCC S-0626 / ISP 5235)).